The primary structure comprises 314 residues: Bifunctional pinoresinol-lariciresinol reductase (314 aa).

NADP(+)-binding positions include 10–16, Arg-35, and Lys-44; that span reads GGTGYIG. Lys-138 acts as the Proton acceptor in catalysis. Arg-142 provides a ligand contact to NADP(+). His-270 is a binding site for substrate.

This sequence belongs to the NmrA-type oxidoreductase family. Isoflavone reductase subfamily. As to quaternary structure, dimer.

It carries out the reaction (+)-lariciresinol + NADP(+) = (+)-pinoresinol + NADPH + H(+). The catalysed reaction is (+)-secoisolariciresinol + NADP(+) = (-)-lariciresinol + NADPH + H(+). Reductase involved in the lignan justicidin B biosynthesis. Catalyzes the enantioselective conversion of (+)-pinoresinol into (+)-lariciresinol and of (-)-lariciresinol into (+)-secoisolariciresinol. Low activity with the other enantiomers. Abstracts the 4R-hydride from the NADPH cofactor during catalysis. This Linum perenne (Perennial flax) protein is Bifunctional pinoresinol-lariciresinol reductase (PLR_Lp1).